Here is a 309-residue protein sequence, read N- to C-terminus: Elongation factor Ts (309 aa).

The segment at 82–85 (TDFV) is involved in Mg(2+) ion dislocation from EF-Tu.

This sequence belongs to the EF-Ts family.

It is found in the cytoplasm. Its function is as follows. Associates with the EF-Tu.GDP complex and induces the exchange of GDP to GTP. It remains bound to the aminoacyl-tRNA.EF-Tu.GTP complex up to the GTP hydrolysis stage on the ribosome. In Rickettsia africae (strain ESF-5), this protein is Elongation factor Ts.